We begin with the raw amino-acid sequence, 174 residues long: Peptidyl-prolyl cis-trans isomerase-like 1 (174 aa).

Positions 5–159 (SPTYVTFDTS…EEIKIHRARL (155 aa)) constitute a PPIase cyclophilin-type domain.

It belongs to the cyclophilin-type PPIase family. PPIL1 subfamily.

The enzyme catalyses [protein]-peptidylproline (omega=180) = [protein]-peptidylproline (omega=0). Functionally, PPIases accelerate the folding of proteins. It catalyzes the cis-trans isomerization of proline imidic peptide bonds in oligopeptides. The polypeptide is Peptidyl-prolyl cis-trans isomerase-like 1 (CYP1) (Cryptococcus neoformans var. neoformans serotype D (strain B-3501A) (Filobasidiella neoformans)).